The chain runs to 396 residues: Vacuolar protease A (396 aa).

A signal peptide spans Met-1 to Ala-17. Residues Gly-18–Ser-70 constitute a propeptide, activation peptide. One can recognise a Peptidase A1 domain in the interval Tyr-85–Ala-392. Residue Asp-103 is part of the active site. A disulfide bond links Cys-116 and Cys-121. The N-linked (GlcNAc...) asparagine glycan is linked to Asn-138. Asp-284 is an active-site residue. Cys-318 and Cys-351 form a disulfide bridge. The N-linked (GlcNAc...) asparagine glycan is linked to Asn-335.

This sequence belongs to the peptidase A1 family.

The protein resides in the vacuole. The sequence is that of Vacuolar protease A (pep-4) from Neurospora crassa (strain ATCC 24698 / 74-OR23-1A / CBS 708.71 / DSM 1257 / FGSC 987).